A 790-amino-acid polypeptide reads, in one-letter code: Cadherin-18 (790 aa).

An N-terminal signal peptide occupies residues 1-24 (MKITSTSCICPVLVCLCFVQRCYG). The propeptide occupies 25–53 (TAHHSSIKVMRNQTKHIEGETEVHHRPKR). N-linked (GlcNAc...) asparagine glycosylation is present at Asn36. Cadherin domains are found at residues 54–159 (GWVW…APKF), 160–268 (TDGP…PPRF), 269–383 (PQKH…PPLF), 384–486 (SMPS…DNPP), and 487–608 (ELAR…FLSS). At 54–608 (GWVWNQFFVL…TCHAEAFLSS (555 aa)) the chain is on the extracellular side. N-linked (GlcNAc...) asparagine glycosylation is present at Asn255. N-linked (GlcNAc...) asparagine glycans are attached at residues Asn455 and Asn536. The chain crosses the membrane as a helical span at residues 609–636 (AGLSTGALIAILLCVLILLAIVVLFITL). Topologically, residues 637 to 790 (RRSKKEPLII…YGEIESERTT (154 aa)) are cytoplasmic. Ser786 carries the post-translational modification Phosphoserine.

The protein resides in the cell membrane. Its function is as follows. Cadherins are calcium-dependent cell adhesion proteins. They preferentially interact with themselves in a homophilic manner in connecting cells; cadherins may thus contribute to the sorting of heterogeneous cell types. The protein is Cadherin-18 (CDH18) of Homo sapiens (Human).